Here is a 245-residue protein sequence, read N- to C-terminus: Retrovirus-related Pol polyprotein from type-1 retrotransposable element R1 (245 aa).

The Reverse transcriptase domain maps to 1-105; the sequence is LKDGTGIVAA…VDLETYCNKA (105 aa). A nucleic acid-binding endonuclease region spans residues 106-245; it reads EVRQKFREKE…IVRDDSNLEQ (140 aa).

The catalysed reaction is DNA(n) + a 2'-deoxyribonucleoside 5'-triphosphate = DNA(n+1) + diphosphate. The polypeptide is Retrovirus-related Pol polyprotein from type-1 retrotransposable element R1 (Popillia japonica (Japanese beetle)).